We begin with the raw amino-acid sequence, 318 residues long: MESFPVINMEKMNGEERAATMGLINDACENWGFFELVNHGIPPELMDTVERVTKAHYKKCMEQRFKELVASKALEGIQAEVTDMDWESTYFLRHLPQSNISEVPDLDEEYRRVMKDFAERLEKLAEYLLDLLCENLGLEKGYLKKAFYGTKGPNFGTKVANYPPCPKADLIKGLRAHTDAGGIILLFQDDKVSGLQLLKDDQWIDVPPMKHSIVINLGDQLEVITNGKYKSVLHRVVAQTDGTRMSIASFYNPGNDAVIYPAPALVEKEVEEKEVYPKFVFDDYMKLYAALKFQAKEPRFEAMKAVEANVNLGPIATV.

A Fe2OG dioxygenase domain is found at 153–253; the sequence is PNFGTKVANY…RMSIASFYNP (101 aa). The Fe cation site is built by histidine 177, aspartate 179, and histidine 234.

Belongs to the iron/ascorbate-dependent oxidoreductase family. Fe cation serves as cofactor.

It catalyses the reaction 1-aminocyclopropane-1-carboxylate + L-ascorbate + O2 = ethene + L-dehydroascorbate + hydrogen cyanide + CO2 + 2 H2O. The protein operates within alkene biosynthesis; ethylene biosynthesis via S-adenosyl-L-methionine; ethylene from S-adenosyl-L-methionine: step 2/2. The chain is 1-aminocyclopropane-1-carboxylate oxidase (DK-ACO1) from Diospyros kaki (Kaki persimmon).